The primary structure comprises 117 residues: Immunoglobulin lambda variable 10-54 (117 aa).

Residues 1–21 (MPWALLLLTLLTHSAVSVVQA) form the signal peptide. The framework-1 stretch occupies residues 20–43 (QAGLTQPPSVSKGLRQTATLTCTG). An Ig-like domain is found at 22–117 (GLTQPPSVSK…CSALDSSLSA (96 aa)). An intrachain disulfide couples Cys41 to Cys108. Residues 44 to 52 (NSNIVGNQG) are complementarity-determining-1. The interval 53-69 (AAWLQQHQGHPPKLLSY) is framework-2. Residues 70 to 72 (RNN) form a complementarity-determining-2 region. Residues 73–108 (NRPSGISERFSASRSGNTASLTITGLQPEDEADYYC) are framework-3. The interval 109-117 (SALDSSLSA) is complementarity-determining-3.

As to quaternary structure, immunoglobulins are composed of two identical heavy chains and two identical light chains; disulfide-linked.

It is found in the secreted. The protein resides in the cell membrane. In terms of biological role, v region of the variable domain of immunoglobulin light chains that participates in the antigen recognition. Immunoglobulins, also known as antibodies, are membrane-bound or secreted glycoproteins produced by B lymphocytes. In the recognition phase of humoral immunity, the membrane-bound immunoglobulins serve as receptors which, upon binding of a specific antigen, trigger the clonal expansion and differentiation of B lymphocytes into immunoglobulins-secreting plasma cells. Secreted immunoglobulins mediate the effector phase of humoral immunity, which results in the elimination of bound antigens. The antigen binding site is formed by the variable domain of one heavy chain, together with that of its associated light chain. Thus, each immunoglobulin has two antigen binding sites with remarkable affinity for a particular antigen. The variable domains are assembled by a process called V-(D)-J rearrangement and can then be subjected to somatic hypermutations which, after exposure to antigen and selection, allow affinity maturation for a particular antigen. The sequence is that of Immunoglobulin lambda variable 10-54 from Homo sapiens (Human).